The primary structure comprises 171 residues: ATP synthase subunit b (171 aa).

Residues 3-23 (KFLFFIFVFVGISFAGDDTAT) traverse the membrane as a helical segment.

Belongs to the ATPase B chain family. F-type ATPases have 2 components, F(1) - the catalytic core - and F(0) - the membrane proton channel. F(1) has five subunits: alpha(3), beta(3), gamma(1), delta(1), epsilon(1). F(0) has three main subunits: a(1), b(2) and c(10-14). The alpha and beta chains form an alternating ring which encloses part of the gamma chain. F(1) is attached to F(0) by a central stalk formed by the gamma and epsilon chains, while a peripheral stalk is formed by the delta and b chains.

It localises to the cell inner membrane. Functionally, f(1)F(0) ATP synthase produces ATP from ADP in the presence of a proton or sodium gradient. F-type ATPases consist of two structural domains, F(1) containing the extramembraneous catalytic core and F(0) containing the membrane proton channel, linked together by a central stalk and a peripheral stalk. During catalysis, ATP synthesis in the catalytic domain of F(1) is coupled via a rotary mechanism of the central stalk subunits to proton translocation. Its function is as follows. Component of the F(0) channel, it forms part of the peripheral stalk, linking F(1) to F(0). The polypeptide is ATP synthase subunit b (Campylobacter hominis (strain ATCC BAA-381 / DSM 21671 / CCUG 45161 / LMG 19568 / NCTC 13146 / CH001A)).